We begin with the raw amino-acid sequence, 378 residues long: Erythronate-4-phosphate dehydrogenase (378 aa).

Positions 45 and 66 each coordinate substrate. Residues aspartate 146 and threonine 175 each coordinate NAD(+). The active site involves arginine 208. Aspartate 232 is an NAD(+) binding site. Glutamate 237 is a catalytic residue. Histidine 254 acts as the Proton donor in catalysis. Glycine 257 is an NAD(+) binding site. Tyrosine 258 contributes to the substrate binding site.

Belongs to the D-isomer specific 2-hydroxyacid dehydrogenase family. PdxB subfamily. Homodimer.

The protein localises to the cytoplasm. It catalyses the reaction 4-phospho-D-erythronate + NAD(+) = (R)-3-hydroxy-2-oxo-4-phosphooxybutanoate + NADH + H(+). Its pathway is cofactor biosynthesis; pyridoxine 5'-phosphate biosynthesis; pyridoxine 5'-phosphate from D-erythrose 4-phosphate: step 2/5. Functionally, catalyzes the oxidation of erythronate-4-phosphate to 3-hydroxy-2-oxo-4-phosphonooxybutanoate. The sequence is that of Erythronate-4-phosphate dehydrogenase from Salmonella paratyphi A (strain ATCC 9150 / SARB42).